Here is a 649-residue protein sequence, read N- to C-terminus: Thioredoxin reductase 1, cytoplasmic (649 aa).

M1 bears the N-acetylmethionine mark. The segment at M1–S49 is disordered. Over residues K22 to P36 the composition is skewed to basic and acidic residues. The region spanning R56–D156 is the Glutaredoxin domain. The tract at residues L145–L149 is required for interaction with ESR1 and ESR2. FAD is bound by residues S172–G173, D192–F193, T208–C209, and G213–K217. Cysteines 209 and 214 form a disulfide. K218 is modified (N6-succinyllysine). Y281 is modified (phosphotyrosine). Residues Y281–G282 and T311 each bind FAD. NADP(+)-binding positions include R316, A348 to E354, R371 to S372, R376, R376 to F378, G442 to R443, and K465. Residue Y350 coordinates FAD. FAD is bound by residues D484, E491–T493, and H622. Residue E491 participates in NADP(+) binding. The active-site Proton acceptor is H622. Residues C647 to U648 constitute a cross-link (cysteinyl-selenocysteine (Cys-Sec)). Residue U648 is a non-standard amino acid, selenocysteine.

This sequence belongs to the class-I pyridine nucleotide-disulfide oxidoreductase family. As to quaternary structure, homodimer. Interacts with HERC5. In terms of assembly, interacts with ESR1 and ESR2. It depends on FAD as a cofactor. Post-translationally, the N-terminus is blocked. ISGylated. Expressed predominantly in Leydig cells (at protein level). Also expressed in ovary, spleen, heart, liver, kidney and pancreas and in a number of cancer cell lines. As to expression, widely expressed with highest levels in kidney, testis, uterus, ovary, prostate, placenta and fetal liver.

It is found in the cytoplasm. The protein localises to the nucleus. The enzyme catalyses [thioredoxin]-dithiol + NADP(+) = [thioredoxin]-disulfide + NADPH + H(+). It carries out the reaction H2O2 + NADPH + H(+) = NADP(+) + 2 H2O. Functionally, reduces disulfideprotein thioredoxin (Trx) to its dithiol-containing form. Homodimeric flavoprotein involved in the regulation of cellular redox reactions, growth and differentiation. Contains a selenocysteine residue at the C-terminal active site that is essential for catalysis. Also has reductase activity on hydrogen peroxide (H2O2). In terms of biological role, induces actin and tubulin polymerization, leading to formation of cell membrane protrusions. Its function is as follows. Enhances the transcriptional activity of estrogen receptors ESR1 and ESR2. Enhances the transcriptional activity of the estrogen receptor ESR2 only. Mediates cell death induced by a combination of interferon-beta and retinoic acid. This is Thioredoxin reductase 1, cytoplasmic from Homo sapiens (Human).